The sequence spans 504 residues: ATP synthase subunit alpha, chloroplastic (504 aa).

Position 170-177 (170-177) interacts with ATP; the sequence is GDRQTGKT.

It belongs to the ATPase alpha/beta chains family. As to quaternary structure, F-type ATPases have 2 components, CF(1) - the catalytic core - and CF(0) - the membrane proton channel. CF(1) has five subunits: alpha(3), beta(3), gamma(1), delta(1), epsilon(1). CF(0) has four main subunits: a, b, b' and c.

Its subcellular location is the plastid. It localises to the chloroplast thylakoid membrane. It catalyses the reaction ATP + H2O + 4 H(+)(in) = ADP + phosphate + 5 H(+)(out). Its function is as follows. Produces ATP from ADP in the presence of a proton gradient across the membrane. The alpha chain is a regulatory subunit. This is ATP synthase subunit alpha, chloroplastic from Porphyra purpurea (Red seaweed).